A 107-amino-acid chain; its full sequence is MGGKTLTRADLAEAVYRKVGLSRTESAELVEAVLDEICEAIVRGETVKLSSFATFHVRSKNERIGRNPKTGEEVPILPRRVMTFKSSNVLKNRILRSHQNSKAKGGK.

This sequence belongs to the bacterial histone-like protein family. Heterodimer of an alpha and a beta chain.

Its function is as follows. This protein is one of the two subunits of integration host factor, a specific DNA-binding protein that functions in genetic recombination as well as in transcriptional and translational control. The polypeptide is Integration host factor subunit alpha (Mesorhizobium japonicum (strain LMG 29417 / CECT 9101 / MAFF 303099) (Mesorhizobium loti (strain MAFF 303099))).